Consider the following 368-residue polypeptide: Aminomethyltransferase (368 aa).

It belongs to the GcvT family. In terms of assembly, the glycine cleavage system is composed of four proteins: P, T, L and H.

It catalyses the reaction N(6)-[(R)-S(8)-aminomethyldihydrolipoyl]-L-lysyl-[protein] + (6S)-5,6,7,8-tetrahydrofolate = N(6)-[(R)-dihydrolipoyl]-L-lysyl-[protein] + (6R)-5,10-methylene-5,6,7,8-tetrahydrofolate + NH4(+). Functionally, the glycine cleavage system catalyzes the degradation of glycine. In Xylella fastidiosa (strain M12), this protein is Aminomethyltransferase.